The following is a 186-amino-acid chain: NADH-dependent FMN reductase SfnE (186 aa).

It belongs to the SsuE family.

It catalyses the reaction FMNH2 + NAD(+) = FMN + NADH + 2 H(+). In terms of biological role, involved in the dimethyl sulfide degradation pathway. Catalyzes the NADH-dependent reduction of FMN. The sequence is that of NADH-dependent FMN reductase SfnE from Pseudomonas putida (Arthrobacter siderocapsulatus).